Reading from the N-terminus, the 800-residue chain is Protein PET111, mitochondrial (800 aa).

The protein to yeast YHR160C.

It localises to the mitochondrion matrix. Functionally, required for translation of the mitochondrial gene for cytochrome c oxidase subunit II (COX2). The protein is Protein PET111, mitochondrial (PET111) of Saccharomyces cerevisiae (strain ATCC 204508 / S288c) (Baker's yeast).